Here is a 110-residue protein sequence, read N- to C-terminus: Iron-sulfur cluster assembly protein CyaY (110 aa).

This sequence belongs to the frataxin family.

In terms of biological role, involved in iron-sulfur (Fe-S) cluster assembly. May act as a regulator of Fe-S biogenesis. In Pseudomonas syringae pv. tomato (strain ATCC BAA-871 / DC3000), this protein is Iron-sulfur cluster assembly protein CyaY.